Consider the following 159-residue polypeptide: Phosphopantetheine adenylyltransferase (159 aa).

S8 is a substrate binding site. Residues S8–F9 and H16 contribute to the ATP site. K40, L73, and K87 together coordinate substrate. ATP is bound by residues G88–R90, E98, and Y122–T128.

It belongs to the bacterial CoaD family. In terms of assembly, homohexamer. Requires Mg(2+) as cofactor.

It localises to the cytoplasm. It catalyses the reaction (R)-4'-phosphopantetheine + ATP + H(+) = 3'-dephospho-CoA + diphosphate. It functions in the pathway cofactor biosynthesis; coenzyme A biosynthesis; CoA from (R)-pantothenate: step 4/5. Reversibly transfers an adenylyl group from ATP to 4'-phosphopantetheine, yielding dephospho-CoA (dPCoA) and pyrophosphate. The chain is Phosphopantetheine adenylyltransferase from Corynebacterium efficiens (strain DSM 44549 / YS-314 / AJ 12310 / JCM 11189 / NBRC 100395).